Reading from the N-terminus, the 338-residue chain is Glycerol-3-phosphate dehydrogenase [NAD(P)+] (338 aa).

3 residues coordinate NADPH: S13, W14, and K108. Sn-glycerol 3-phosphate contacts are provided by K108, G139, and S141. Residue A143 participates in NADPH binding. K194, D247, S257, R258, and N259 together coordinate sn-glycerol 3-phosphate. K194 acts as the Proton acceptor in catalysis. R258 is a binding site for NADPH. Residues V282 and E284 each contribute to the NADPH site.

It belongs to the NAD-dependent glycerol-3-phosphate dehydrogenase family.

The protein localises to the cytoplasm. It catalyses the reaction sn-glycerol 3-phosphate + NAD(+) = dihydroxyacetone phosphate + NADH + H(+). It carries out the reaction sn-glycerol 3-phosphate + NADP(+) = dihydroxyacetone phosphate + NADPH + H(+). Its pathway is membrane lipid metabolism; glycerophospholipid metabolism. Catalyzes the reduction of the glycolytic intermediate dihydroxyacetone phosphate (DHAP) to sn-glycerol 3-phosphate (G3P), the key precursor for phospholipid synthesis. The sequence is that of Glycerol-3-phosphate dehydrogenase [NAD(P)+] from Streptococcus agalactiae serotype V (strain ATCC BAA-611 / 2603 V/R).